The sequence spans 335 residues: Acetyl-coenzyme A carboxylase carboxyl transferase subunit alpha (335 aa).

In terms of domain architecture, CoA carboxyltransferase C-terminal spans 48–308 (VLESKVDALR…KSLLVEELRM (261 aa)).

Belongs to the AccA family. Acetyl-CoA carboxylase is a heterohexamer composed of biotin carboxyl carrier protein (AccB), biotin carboxylase (AccC) and two subunits each of ACCase subunit alpha (AccA) and ACCase subunit beta (AccD).

It is found in the cytoplasm. The enzyme catalyses N(6)-carboxybiotinyl-L-lysyl-[protein] + acetyl-CoA = N(6)-biotinyl-L-lysyl-[protein] + malonyl-CoA. Its pathway is lipid metabolism; malonyl-CoA biosynthesis; malonyl-CoA from acetyl-CoA: step 1/1. Functionally, component of the acetyl coenzyme A carboxylase (ACC) complex. First, biotin carboxylase catalyzes the carboxylation of biotin on its carrier protein (BCCP) and then the CO(2) group is transferred by the carboxyltransferase to acetyl-CoA to form malonyl-CoA. The chain is Acetyl-coenzyme A carboxylase carboxyl transferase subunit alpha from Chlorobium phaeobacteroides (strain BS1).